Here is a 334-residue protein sequence, read N- to C-terminus: Coiled-coil domain-containing protein 89 (334 aa).

Residues 75–318 (EAAQRFQSER…EAYKKHSGDL (244 aa)) are a coiled coil.

This sequence belongs to the CCDC89 family. Interacts (via C-terminus) with hey1/bc8 (via Orange domain). In terms of tissue distribution, in adults, expressed at varying levels in different organs including the liver and brain, with highest expression in the testis.

The protein resides in the cytoplasm. It localises to the nucleus. The chain is Coiled-coil domain-containing protein 89 from Xenopus laevis (African clawed frog).